A 117-amino-acid polypeptide reads, in one-letter code: Large ribosomal subunit protein bL20 (117 aa).

The protein belongs to the bacterial ribosomal protein bL20 family.

Functionally, binds directly to 23S ribosomal RNA and is necessary for the in vitro assembly process of the 50S ribosomal subunit. It is not involved in the protein synthesizing functions of that subunit. The sequence is that of Large ribosomal subunit protein bL20 from Roseiflexus castenholzii (strain DSM 13941 / HLO8).